The chain runs to 147 residues: Small ribosomal subunit protein bS16 (147 aa).

Residues 81 to 147 (QKFTGDTSPS…GDNSGEKAEA (67 aa)) are disordered. Composition is skewed to basic and acidic residues over residues 95–104 (QPERPNKDDL) and 114–125 (EAPREAITKKSE). Low complexity predominate over residues 126–140 (GAAADEASESAAGDN).

The protein belongs to the bacterial ribosomal protein bS16 family.

The chain is Small ribosomal subunit protein bS16 from Cutibacterium acnes (strain DSM 16379 / KPA171202) (Propionibacterium acnes).